Reading from the N-terminus, the 489-residue chain is MSVYGLQRLYIGGGYVDATSGKTFDTFDPATGELLAQVQQASAADVDRAVASAREGQREWAAMTAMQRSRILRRAVDLLRERNDELAAIETRDTGKPIGETLAVDIVTGADVIEYYAGLATAIEGLQVPLRAESFVYTRREPLGVCAGIGAWNYPIQIACWKTAPALAAGNAMVFKPSEVTPLTALKLAEIYTEAGVPAGVFNVVQGDGSVGALLTGHPDIAKVSFTGGVETGKKVMSLAGASSLKEVTMELGGKSPLIVFEDADLDRAADIAVTANFFSSGQVCTNGTRVFVHRSVKDAFTQRVLERVKRIRVGKPTDADTNFGPLVSAAQLDKVLGFIDSGKAEGAKLLAGGTRLTDGHFGSGQYVAPTVFGDCRDDMKIVREEIFGPVMSILDFESEDEVIARANDTHYGLAAGVVTENLSRAHRTIHRLEAGICWINTWGESPAEMPVGGYKQSGVGRENGITTLEHYTRIKSVQVELGRYNPVF.

T26 and D93 together coordinate K(+). 150-152 (GAW) serves as a coordination point for NAD(+). K162 serves as the catalytic Charge relay system. 176–179 (KPSE) contributes to the NAD(+) binding site. V180 provides a ligand contact to K(+). 229–232 (GVET) contacts NAD(+). Residue L245 coordinates K(+). E251 acts as the Proton acceptor in catalysis. 3 residues coordinate NAD(+): G253, C285, and E386. The active-site Nucleophile is C285. At C285 the chain carries Cysteine sulfenic acid (-SOH). K456 and G459 together coordinate K(+). Catalysis depends on E463, which acts as the Charge relay system.

Belongs to the aldehyde dehydrogenase family. As to quaternary structure, dimer of dimers. The cofactor is K(+).

The enzyme catalyses betaine aldehyde + NAD(+) + H2O = glycine betaine + NADH + 2 H(+). Its pathway is amine and polyamine biosynthesis; betaine biosynthesis via choline pathway; betaine from betaine aldehyde: step 1/1. Functionally, involved in the biosynthesis of the osmoprotectant glycine betaine. Catalyzes the irreversible oxidation of betaine aldehyde to the corresponding acid. This is Betaine aldehyde dehydrogenase from Burkholderia ambifaria (strain MC40-6).